The primary structure comprises 300 residues: 2-keto-3-deoxy-L-fuconate dehydrogenase (300 aa).

Residues 63–90 and Asp112 contribute to the NAD(+) site; that span reads LITA…IATD. Position 198 (Arg198) interacts with substrate. The active-site Proton acceptor is Tyr201. Residues Lys205 and 234 to 238 contribute to the NAD(+) site; that span reads IKTPS. Positions 242 and 260 each coordinate substrate.

Belongs to the short-chain dehydrogenases/reductases (SDR) family.

Its function is as follows. Plays a role in the catabolism of L-fucose. Catalyzes the NAD(+)-dependent oxidation of 2-keo-3-deoxy-L-fuconate to 2,4-diketo-3-deoxy-L-fuconate. The polypeptide is 2-keto-3-deoxy-L-fuconate dehydrogenase (Xanthomonas campestris pv. campestris (strain ATCC 33913 / DSM 3586 / NCPPB 528 / LMG 568 / P 25)).